The chain runs to 160 residues: Ribosome maturation factor RimP (160 aa).

This sequence belongs to the RimP family.

It is found in the cytoplasm. Its function is as follows. Required for maturation of 30S ribosomal subunits. The polypeptide is Ribosome maturation factor RimP (Geobacter sp. (strain M21)).